Reading from the N-terminus, the 334-residue chain is Tryptophan--tRNA ligase (334 aa).

Residues 11-13 and 19-20 each bind ATP; these read QPS and GN. The 'HIGH' region signature appears at 12 to 20; the sequence is PSGELTIGN. Asp135 contributes to the L-tryptophan binding site. ATP is bound by residues 147 to 149, Val186, and 195 to 199; these read GED and KMSKS. Residues 195–199 carry the 'KMSKS' region motif; that stretch reads KMSKS.

The protein belongs to the class-I aminoacyl-tRNA synthetase family. As to quaternary structure, homodimer.

Its subcellular location is the cytoplasm. It catalyses the reaction tRNA(Trp) + L-tryptophan + ATP = L-tryptophyl-tRNA(Trp) + AMP + diphosphate + H(+). Its function is as follows. Catalyzes the attachment of tryptophan to tRNA(Trp). The chain is Tryptophan--tRNA ligase from Escherichia coli O157:H7.